A 596-amino-acid polypeptide reads, in one-letter code: Sodium/mannose cotransporter SLC5A10 (596 aa).

Residues 1 to 15 (MAANSTSDLHTPGTQ) are Extracellular-facing. Asn-4 carries an N-linked (GlcNAc...) asparagine glycan. The chain crosses the membrane as a helical span at residues 16 to 36 (LSVADIIVITVYFALNVAVGI). The Cytoplasmic portion of the chain corresponds to 37 to 72 (WSSCRASRNTVNGYFLAGRDMTWWPIGASLFASSEG). A helical transmembrane segment spans residues 73–93 (SGLFIGLAGSGAAGGLAVAGF). The Extracellular segment spans residues 94-99 (EWNATY). Asn-96 is a glycosylation site (N-linked (GlcNAc...) asparagine). A helical membrane pass occupies residues 100-120 (VLLALAWVFVPIYISSEIVTL). The Cytoplasmic segment spans residues 121 to 149 (PEYIQKRYGGQRIRMYLSVLSLLLSVFTK). A phosphoserine mark is found at Ser-141 and Ser-145. Thr-148 is subject to Phosphothreonine. Residues 150–170 (ISLDLYAGALFVHICLGWNFY) form a helical membrane-spanning segment. Topologically, residues 171–173 (LST) are extracellular. A helical transmembrane segment spans residues 174 to 194 (ILTLGITALYTIAGGLAAVIY). Topologically, residues 195 to 200 (TDALQT) are cytoplasmic. A helical transmembrane segment spans residues 201-221 (LIMVVGAVILTIKAFDQIGGY). Residues 222–264 (GQLEAAYAQAIPSRTIANTTCHLPRTDAMHMFRDPHTGDLPWT) lie on the Extracellular side of the membrane. The chain crosses the membrane as a helical span at residues 265-285 (GMTFGLTIMATWYWCTDQVIV). At 286 to 300 (QRSLSARDLNHAKAG) the chain is on the cytoplasmic side. A helical transmembrane segment spans residues 301–321 (SILASYLKMLPMGLIIMPGMI). Over 322 to 355 (SRALFPDDVGCVVPSECLRACGAEVGCSNIAYPK) the chain is Extracellular. Residues 356-376 (LVMELMPIGLRGLMIAVMLAA) form a helical membrane-spanning segment. Over 377 to 409 (LMSSLTSIFNSSSTLFTMDIWRRLRPRSGEREL) the chain is Cytoplasmic. The chain crosses the membrane as a helical span at residues 410–430 (LLVGRLVIVALIGVSVAWIPV). The Extracellular portion of the chain corresponds to 431–443 (LQDSNSGQLFIYM). Residues 444 to 464 (QSVTSSLAPPVTAVFVLGVFW) form a helical membrane-spanning segment. Over 465–471 (RRANEQG) the chain is Cytoplasmic. A helical membrane pass occupies residues 472 to 492 (AFWGLIAGLVVGATRLVLEFL). The Extracellular segment spans residues 493-513 (NPAPPCGEPDTRPAVLGSIHY). A helical transmembrane segment spans residues 514–534 (LHFAVALFALSGAVVVAGSLL). The Cytoplasmic portion of the chain corresponds to 535-575 (TPPPQSVQIENLTWWTLAQDVPLGTKAGDGQTPQKHAFWAR). A helical transmembrane segment spans residues 576-596 (VCGFNAILLMCVNIFFYAYFA).

The protein belongs to the sodium:solute symporter (SSF) (TC 2.A.21) family. As to expression, predominantly expressed at high levels in kidney. Very low expression is detected in testes. In terms of tissue distribution, expressed in kidney. The most abundant isoform expressed in kidney.

It localises to the apical cell membrane. It carries out the reaction D-mannose(out) + Na(+)(out) = D-mannose(in) + Na(+)(in). The catalysed reaction is D-fructopyranose(out) + Na(+)(out) = D-fructopyranose(in) + Na(+)(in). Its activity is regulated as follows. Inhibited by phlorizin. Functionally, electrogenic Na+-coupled sugar symporter that actively transports D-mannose or D-fructose at the plasma membrane, with a Na+ to sugar coupling ratio of 1:1. Transporter activity is driven by a transmembrane Na+ electrochemical gradient set by the Na+/K+ pump. Exclusively recognizes sugar substrates having a pyranose ring with an axial hydroxyl group on carbon 2. Has likely evolved to enable renal reabsorption of D-mannose, an important constituent of oligosaccharide chains of glycoproteins. Contributes to dietary D-fructose reabsorption from glomerular filtrate across the brush border of the kidney. Its function is as follows. Appears to have no transporter activity. The sequence is that of Sodium/mannose cotransporter SLC5A10 (SLC5A10) from Homo sapiens (Human).